Consider the following 335-residue polypeptide: Glyceraldehyde-3-phosphate dehydrogenase, cytosolic (335 aa).

NAD(+)-binding positions include 13–14 (RI), D35, and R80. Residues 151 to 153 (SCT), T182, 211 to 212 (TG), and R234 each bind D-glyceraldehyde 3-phosphate. The active-site Nucleophile is the C152. N316 serves as a coordination point for NAD(+).

Belongs to the glyceraldehyde-3-phosphate dehydrogenase family. As to quaternary structure, homotetramer.

It is found in the cytoplasm. The catalysed reaction is D-glyceraldehyde 3-phosphate + phosphate + NAD(+) = (2R)-3-phospho-glyceroyl phosphate + NADH + H(+). The protein operates within carbohydrate degradation; glycolysis; pyruvate from D-glyceraldehyde 3-phosphate: step 1/5. The protein is Glyceraldehyde-3-phosphate dehydrogenase, cytosolic (GAPC) of Chondrus crispus (Carrageen Irish moss).